We begin with the raw amino-acid sequence, 220 residues long: Large ribosomal subunit protein uL3 (220 aa).

The segment at G145–V169 is disordered.

The protein belongs to the universal ribosomal protein uL3 family. Part of the 50S ribosomal subunit. Forms a cluster with proteins L14 and L19.

One of the primary rRNA binding proteins, it binds directly near the 3'-end of the 23S rRNA, where it nucleates assembly of the 50S subunit. This Bdellovibrio bacteriovorus (strain ATCC 15356 / DSM 50701 / NCIMB 9529 / HD100) protein is Large ribosomal subunit protein uL3.